The following is a 173-amino-acid chain: RNA polymerase sigma factor YlaC (173 aa).

Belongs to the sigma-70 factor family. ECF subfamily.

Functionally, sigma factors are initiation factors that promote the attachment of RNA polymerase to specific initiation sites and are then released. This sigma factor contributes to oxidative stress resistance. The protein is RNA polymerase sigma factor YlaC (ylaC) of Bacillus subtilis (strain 168).